The primary structure comprises 147 residues: Cytochrome c-type biogenesis protein CcmE 1 (147 aa).

The Cytoplasmic segment spans residues 1–9; the sequence is MKSLKKQRR. Residues 10-30 traverse the membrane as a helical; Signal-anchor for type II membrane protein segment; the sequence is IQVIILATVALVLATGLIGYA. The Periplasmic segment spans residues 31-147; the sequence is MRDGINFFRA…EQGVYQAPES (117 aa). Heme is bound by residues His123 and Tyr127.

It belongs to the CcmE/CycJ family.

Its subcellular location is the cell inner membrane. Heme chaperone required for the biogenesis of c-type cytochromes. Transiently binds heme delivered by CcmC and transfers the heme to apo-cytochromes in a process facilitated by CcmF and CcmH. This Ruegeria pomeroyi (strain ATCC 700808 / DSM 15171 / DSS-3) (Silicibacter pomeroyi) protein is Cytochrome c-type biogenesis protein CcmE 1.